Here is a 209-residue protein sequence, read N- to C-terminus: Peptidyl-tRNA hydrolase (209 aa).

A tRNA-binding site is contributed by Tyr14. His19 acts as the Proton acceptor in catalysis. TRNA contacts are provided by Tyr68, Asn70, and Asn116.

This sequence belongs to the PTH family. Monomer.

Its subcellular location is the cytoplasm. It catalyses the reaction an N-acyl-L-alpha-aminoacyl-tRNA + H2O = an N-acyl-L-amino acid + a tRNA + H(+). Hydrolyzes ribosome-free peptidyl-tRNAs (with 1 or more amino acids incorporated), which drop off the ribosome during protein synthesis, or as a result of ribosome stalling. Its function is as follows. Catalyzes the release of premature peptidyl moieties from peptidyl-tRNA molecules trapped in stalled 50S ribosomal subunits, and thus maintains levels of free tRNAs and 50S ribosomes. This is Peptidyl-tRNA hydrolase from Phenylobacterium zucineum (strain HLK1).